The following is a 189-amino-acid chain: Potassium-transporting ATPase KdpC subunit (189 aa).

Residues 6 to 26 (PAILFFIVFTILCGGVYPAVV) form a helical membrane-spanning segment.

It belongs to the KdpC family. As to quaternary structure, the system is composed of three essential subunits: KdpA, KdpB and KdpC.

The protein resides in the cell inner membrane. Its function is as follows. Part of the high-affinity ATP-driven potassium transport (or Kdp) system, which catalyzes the hydrolysis of ATP coupled with the electrogenic transport of potassium into the cytoplasm. This subunit acts as a catalytic chaperone that increases the ATP-binding affinity of the ATP-hydrolyzing subunit KdpB by the formation of a transient KdpB/KdpC/ATP ternary complex. The protein is Potassium-transporting ATPase KdpC subunit of Geotalea uraniireducens (strain Rf4) (Geobacter uraniireducens).